Here is a 542-residue protein sequence, read N- to C-terminus: L-ornithine N(5)-monooxygenase (542 aa).

FAD contacts are provided by residues 45 to 53 (EKHEVFRWH) and Gln64. Residue Lys69 participates in substrate binding. Residue 218 to 221 (SGQS) participates in NADP(+) binding. Substrate is bound by residues 263–266 (NEIF) and Asn294. 294–296 (NYS) is a binding site for NADP(+). The interval 443-472 (FFHDSSPSTASSSTVSTPPTSPETSRFSSP) is disordered. A compositionally biased stretch (low complexity) spans 447-472 (SSPSTASSSTVSTPPTSPETSRFSSP). 518-520 (TLL) contacts FAD. Ser521 contacts substrate.

The protein belongs to the lysine N(6)-hydroxylase/L-ornithine N(5)-oxygenase family. As to quaternary structure, homotetramer. It depends on FAD as a cofactor.

It carries out the reaction L-ornithine + NADPH + O2 = N(5)-hydroxy-L-ornithine + NADP(+) + H2O. The catalysed reaction is L-ornithine + NADH + O2 = N(5)-hydroxy-L-ornithine + NAD(+) + H2O. It functions in the pathway siderophore biosynthesis. Functionally, L-ornithine N(5)-monooxygenase; part of the gene cluster that mediates the biosynthesis of coprinoferrin, an acylated tripeptide hydroxamate siderophore. The biosynthesis of coprinoferrin depends on the hydroxylation of ornithine to N(5)-hydroxyornithine, catalyzed by the monooxygenase cpf2. The second step, the acylation of N(5)-hydroxy-L-ornithine to yield N(5)-hexanoyl-N(5)-hydroxyl-L-ornithine is catalyzed by a not yet identified acyltransferase. Finally, assembly of coprinoferrin is catalyzed by the nonribosomal peptide synthase (NRPS) cpf1 via amide bond formation between three N(5)-hexanoyl-N(5)-hydroxyl-L-ornithine molecules to release the linear trimer. Interestingly, proteins seemingly not directly related to biosynthesis, such as transcription factors, replication factors, and autophagy-related proteins, are conserved among the clusters homologous to the coprinoferrin cluster, suggesting that the cluster may also play developmental and cell biological functions. The polypeptide is L-ornithine N(5)-monooxygenase (Coprinopsis cinerea (strain Okayama-7 / 130 / ATCC MYA-4618 / FGSC 9003) (Inky cap fungus)).